We begin with the raw amino-acid sequence, 30 residues long: Dermaseptin-3.4TR (30 aa).

In terms of tissue distribution, expressed by the skin glands.

It localises to the secreted. Has antimicrobial activity. The polypeptide is Dermaseptin-3.4TR (Phyllomedusa trinitatis (Trinidad leaf frog)).